Consider the following 45-residue polypeptide: Large ribosomal subunit protein bL36 (45 aa).

Positions 1–20 are disordered; sequence MKVSSSIKADPSKGDKLVRR.

It belongs to the bacterial ribosomal protein bL36 family.

This chain is Large ribosomal subunit protein bL36, found in Chlamydia abortus (strain DSM 27085 / S26/3) (Chlamydophila abortus).